The following is a 417-amino-acid chain: Gamma-glutamyl phosphate reductase (417 aa).

It belongs to the gamma-glutamyl phosphate reductase family.

Its subcellular location is the cytoplasm. The catalysed reaction is L-glutamate 5-semialdehyde + phosphate + NADP(+) = L-glutamyl 5-phosphate + NADPH + H(+). It functions in the pathway amino-acid biosynthesis; L-proline biosynthesis; L-glutamate 5-semialdehyde from L-glutamate: step 2/2. Its function is as follows. Catalyzes the NADPH-dependent reduction of L-glutamate 5-phosphate into L-glutamate 5-semialdehyde and phosphate. The product spontaneously undergoes cyclization to form 1-pyrroline-5-carboxylate. In Pectobacterium carotovorum subsp. carotovorum (strain PC1), this protein is Gamma-glutamyl phosphate reductase.